Here is a 199-residue protein sequence, read N- to C-terminus: MTPLAPWDPKYEAKAGPRPVWGANCSSGASFSGRTLCHPSFWPLYEAASGRGLRPVAPATGHWNGQQAPPDAGFPVVCCEDVFLSDPLLPRGQRVPLYLSKAPQQMMGSLKLLPPPPIMSARVLPRPSPSRGPSTAWLSGPELIALTGLLQMSQGEPRPSSSAVGPPDHTSDPPSPCGSPSSSQGADLSLPQTPDTHCP.

2 stretches are compositionally biased toward polar residues: residues 151–163 (QMSQ…SSSA) and 184–199 (QGAD…THCP). The interval 151 to 199 (QMSQGEPRPSSSAVGPPDHTSDPPSPCGSPSSSQGADLSLPQTPDTHCP) is disordered.

May be a component of the mSIN3A corepressor complex. Interacts with SIN3A. Interacts with HDAC2.

It is found in the nucleus. The protein resides in the cytoplasm. In terms of biological role, involved in the transcriptional repression mediated by the mSIN3A but not the N-CoR corepressor complex. The chain is Histone deacetylase complex subunit SAP25 (SAP25) from Homo sapiens (Human).